The chain runs to 450 residues: Glucose-6-phosphate isomerase (450 aa).

The Proton donor role is filled by E291. Active-site residues include H312 and K426.

It belongs to the GPI family.

It localises to the cytoplasm. The catalysed reaction is alpha-D-glucose 6-phosphate = beta-D-fructose 6-phosphate. It functions in the pathway carbohydrate biosynthesis; gluconeogenesis. The protein operates within carbohydrate degradation; glycolysis; D-glyceraldehyde 3-phosphate and glycerone phosphate from D-glucose: step 2/4. In terms of biological role, catalyzes the reversible isomerization of glucose-6-phosphate to fructose-6-phosphate. The sequence is that of Glucose-6-phosphate isomerase from Clostridium botulinum (strain Langeland / NCTC 10281 / Type F).